The following is an 817-amino-acid chain: Collagen-like protein 4 (817 aa).

Collagen-like domains lie at 83–142 (GDTG…KGQD), 145–264 (GSKG…KGDD), and 268–327 (GIQG…KGLK). Disordered stretches follow at residues 87-107 (NKGE…GDNG), 120-458 (FNGS…DKGD), and 479-543 (IIGD…KGDI). 2 N-linked (GlcNAc...) asparagine; by host glycosylation sites follow: Asn106 and Asn121. 2 stretches are compositionally biased toward basic and acidic residues: residues 126-141 (IKGD…DKGQ) and 149-161 (QKGE…DDGI). A glycan (N-linked (GlcNAc...) asparagine; by host) is linked at Asn183. Basic and acidic residues-rich tracts occupy residues 212–224 (IKGD…EDGI) and 233–245 (SKGE…DDGT). Over residues 246–260 (KGITGLKGTKGNSGS) the composition is skewed to low complexity. Residues 294–341 (KGSDGDKGNKGLDGIKGDLGDDGIKGDKGIKGLKGDTGNSDKGDKGSK) show a composition bias toward basic and acidic residues. Residues Asn345 and Asn360 are each glycosylated (N-linked (GlcNAc...) asparagine; by host). Collagen-like domains follow at residues 352 to 411 (GDKG…KGLV) and 430 to 489 (GDKG…KGIK). Basic and acidic residues-rich tracts occupy residues 354–368 (KGSK…ESGD), 377–390 (SKGD…KGDL), and 428–458 (SKGD…DKGD). Low complexity predominate over residues 480-494 (IGDNGSKGIKGSSNN). N-linked (GlcNAc...) asparagine; by host glycosylation occurs at Asn483. Basic and acidic residues-rich tracts occupy residues 495–504 (KGDKGDKGNT), 515–525 (IKGDKGIKGSK), and 533–543 (EKGEKGTKGDI). The region spanning 512–570 (TKGIKGDKGIKGSKGDLGSVGEKGEKGTKGDIGTKGETGLKGIIGDKGELGSKGIKGLS) is the Collagen-like 6 domain. N-linked (GlcNAc...) asparagine; by host glycosylation is found at Asn709, Asn712, and Asn715. Residues 757-771 (GGGGASAFGNGGRGG) are compositionally biased toward gly residues. A disordered region spans residues 757 to 804 (GGGGASAFGNGGRGGNTTQAATKGEYGSGGGGGSEFSPSGSTNGGDGG). Asn772 is a glycosylation site (N-linked (GlcNAc...) asparagine; by host).

Post-translationally, may be hydroxylated on lysine by the viral-encoded procollagen-lysine,2-oxoglutarate 5-dioxygenase.

It localises to the virion. May participate in the formation of a layer of cross-linked glycosylated fibrils at the viral surface thus giving it a hairy-like appearance. The protein is Collagen-like protein 4 of Acanthamoeba polyphaga (Amoeba).